Consider the following 287-residue polypeptide: Large ribosomal subunit protein uL2 (287 aa).

A disordered region spans residues 203–287 (LSAGKAGRNR…SKRGRGGRES (85 aa)). Basic residues-rich tracts occupy residues 209-220 (GRNRWKGRRPKV) and 258-287 (KTRKPKKASSKLIIRRRRKSSKRGRGGRES).

The protein belongs to the universal ribosomal protein uL2 family. As to quaternary structure, part of the 50S ribosomal subunit. Forms a bridge to the 30S subunit in the 70S ribosome.

In terms of biological role, one of the primary rRNA binding proteins. Required for association of the 30S and 50S subunits to form the 70S ribosome, for tRNA binding and peptide bond formation. It has been suggested to have peptidyltransferase activity; this is somewhat controversial. Makes several contacts with the 16S rRNA in the 70S ribosome. The protein is Large ribosomal subunit protein uL2 of Nostoc sp. (strain PCC 7120 / SAG 25.82 / UTEX 2576).